The sequence spans 793 residues: ClpA homolog protein (793 aa).

The segment at 1-24 (MRPRSNAGSSPPDPEEQEHAQVPS) is disordered. In terms of domain architecture, Clp R spans 22 to 168 (VPSFSSTLEQ…NFIAHGVAKD (147 aa)). 2 repeat regions span residues 25 to 88 (FSST…IDDD) and 103 to 168 (PTAA…VAKD). A disordered region spans residues 169–194 (PSYGESRPVQGADEPQETPKAEAGEA). A compositionally biased stretch (basic and acidic residues) spans 185–194 (ETPKAEAGEA). Positions 199–447 (LSKYCVDLNI…AQHLVSDSKR (249 aa)) are i. ATP contacts are provided by residues 244–251 (GDPGVGKT) and 525–532 (GPTGVGKT). Positions 451–639 (LGTKEIEAVV…ILIMTSNVGA (189 aa)) are II.

Belongs to the ClpA/ClpB family.

This Fuscovulum blasticum (Rhodobacter blasticus) protein is ClpA homolog protein.